The chain runs to 244 residues: Leucyl/phenylalanyl-tRNA--protein transferase (244 aa).

Belongs to the L/F-transferase family.

It localises to the cytoplasm. It carries out the reaction N-terminal L-lysyl-[protein] + L-leucyl-tRNA(Leu) = N-terminal L-leucyl-L-lysyl-[protein] + tRNA(Leu) + H(+). It catalyses the reaction N-terminal L-arginyl-[protein] + L-leucyl-tRNA(Leu) = N-terminal L-leucyl-L-arginyl-[protein] + tRNA(Leu) + H(+). The enzyme catalyses L-phenylalanyl-tRNA(Phe) + an N-terminal L-alpha-aminoacyl-[protein] = an N-terminal L-phenylalanyl-L-alpha-aminoacyl-[protein] + tRNA(Phe). Its function is as follows. Functions in the N-end rule pathway of protein degradation where it conjugates Leu, Phe and, less efficiently, Met from aminoacyl-tRNAs to the N-termini of proteins containing an N-terminal arginine or lysine. This chain is Leucyl/phenylalanyl-tRNA--protein transferase, found in Janthinobacterium sp. (strain Marseille) (Minibacterium massiliensis).